The chain runs to 162 residues: Protein S40-4 (162 aa).

It belongs to the senescence regulator S40 family.

The protein resides in the cytoplasm. The sequence is that of Protein S40-4 from Arabidopsis thaliana (Mouse-ear cress).